The chain runs to 138 residues: Lactoylglutathione lyase (138 aa).

The 125-residue stretch at 2–126 folds into the VOC domain; it reads RLLHTMLRVG…DGYKIEFIQK (125 aa). Histidine 5 serves as a coordination point for Ni(2+). Arginine 9 is a binding site for substrate. Glutamate 56 is a binding site for Ni(2+). Substrate-binding residues include asparagine 60 and histidine 74. Ni(2+) contacts are provided by histidine 74 and glutamate 122. Glutamate 122 functions as the Proton donor/acceptor in the catalytic mechanism.

This sequence belongs to the glyoxalase I family. The cofactor is Ni(2+).

It catalyses the reaction (R)-S-lactoylglutathione = methylglyoxal + glutathione. It functions in the pathway secondary metabolite metabolism; methylglyoxal degradation; (R)-lactate from methylglyoxal: step 1/2. In terms of biological role, catalyzes the conversion of hemimercaptal, formed from methylglyoxal and glutathione, to S-lactoylglutathione. In Neisseria meningitidis serogroup A / serotype 4A (strain DSM 15465 / Z2491), this protein is Lactoylglutathione lyase (gloA).